Consider the following 702-residue polypeptide: Elongation factor G (702 aa).

The tr-type G domain occupies 8–290 (ERYRNIGISA…AVIDYLPSPV (283 aa)). GTP is bound by residues 17–24 (AHIDAGKT), 88–92 (DTPGH), and 142–145 (NKMD).

This sequence belongs to the TRAFAC class translation factor GTPase superfamily. Classic translation factor GTPase family. EF-G/EF-2 subfamily.

The protein resides in the cytoplasm. Its function is as follows. Catalyzes the GTP-dependent ribosomal translocation step during translation elongation. During this step, the ribosome changes from the pre-translocational (PRE) to the post-translocational (POST) state as the newly formed A-site-bound peptidyl-tRNA and P-site-bound deacylated tRNA move to the P and E sites, respectively. Catalyzes the coordinated movement of the two tRNA molecules, the mRNA and conformational changes in the ribosome. The sequence is that of Elongation factor G from Acidovorax ebreus (strain TPSY) (Diaphorobacter sp. (strain TPSY)).